Reading from the N-terminus, the 351-residue chain is DNA polymerase IV (351 aa).

The 182-residue stretch at 4 to 185 folds into the UmuC domain; it reads IIHIDMDCFF…LPLAKIPGVG (182 aa). Asp-8 and Asp-103 together coordinate Mg(2+). Residue Glu-104 is part of the active site.

This sequence belongs to the DNA polymerase type-Y family. As to quaternary structure, monomer. It depends on Mg(2+) as a cofactor.

Its subcellular location is the cytoplasm. It carries out the reaction DNA(n) + a 2'-deoxyribonucleoside 5'-triphosphate = DNA(n+1) + diphosphate. In terms of biological role, poorly processive, error-prone DNA polymerase involved in untargeted mutagenesis. Copies undamaged DNA at stalled replication forks, which arise in vivo from mismatched or misaligned primer ends. These misaligned primers can be extended by PolIV. Exhibits no 3'-5' exonuclease (proofreading) activity. May be involved in translesional synthesis, in conjunction with the beta clamp from PolIII. The protein is DNA polymerase IV of Salmonella paratyphi A (strain ATCC 9150 / SARB42).